We begin with the raw amino-acid sequence, 222 residues long: UPF0758 protein YicR (222 aa).

The MPN domain maps to 100 to 222 (PLLSPEMTRE…YVSFAERGWI (123 aa)). Zn(2+)-binding residues include H171, H173, and D184. Residues 171–184 (HNHPSGCAEPSKAD) carry the JAMM motif motif.

It belongs to the UPF0758 family. YicR subfamily.

The polypeptide is UPF0758 protein YicR (Escherichia coli (strain K12 / MC4100 / BW2952)).